The sequence spans 360 residues: S-adenosylmethionine decarboxylase proenzyme (360 aa).

Active-site residues include Glu-13 and Glu-16. Ser-73 (schiff-base intermediate with substrate; via pyruvic acid) is an active-site residue. The residue at position 73 (Ser-73) is a Pyruvic acid (Ser); by autocatalysis. Cys-87 (proton donor; for catalytic activity) is an active-site residue. Active-site proton acceptor; for processing activity residues include Ser-236 and His-249.

It belongs to the eukaryotic AdoMetDC family. The cofactor is pyruvate. In terms of processing, is synthesized initially as an inactive proenzyme. Formation of the active enzyme involves a self-maturation process in which the active site pyruvoyl group is generated from an internal serine residue via an autocatalytic post-translational modification. Two non-identical subunits are generated from the proenzyme in this reaction, and the pyruvate is formed at the N-terminus of the alpha chain, which is derived from the carboxyl end of the proenzyme. The post-translation cleavage follows an unusual pathway, termed non-hydrolytic serinolysis, in which the side chain hydroxyl group of the serine supplies its oxygen atom to form the C-terminus of the beta chain, while the remainder of the serine residue undergoes an oxidative deamination to produce ammonia and the pyruvoyl group blocking the N-terminus of the alpha chain. Stolon, also expressed in leaves, stems and roots.

It catalyses the reaction S-adenosyl-L-methionine + H(+) = S-adenosyl 3-(methylsulfanyl)propylamine + CO2. It functions in the pathway amine and polyamine biosynthesis; S-adenosylmethioninamine biosynthesis; S-adenosylmethioninamine from S-adenosyl-L-methionine: step 1/1. This Solanum tuberosum (Potato) protein is S-adenosylmethionine decarboxylase proenzyme (SAMDC).